Here is a 953-residue protein sequence, read N- to C-terminus: Protein ENHANCER OF LHP1 1 (953 aa).

WD repeat units follow at residues 15-55 (GGSA…TLPP), 60-99 (HHQD…FQTN), 102-143 (RFTL…RVLK), 144-183 (GHKG…VSFT), 192-232 (GFNT…KLFA), 236-275 (DHLE…DIDR), and 277-316 (KFEE…SMLS). Disordered stretches follow at residues 347–370 (SESL…RKRL), 385–419 (EELN…GAFK), and 851–877 (ESKV…SATK). Residues 349 to 359 (SLDDAMGDSDD) are compositionally biased toward acidic residues. Residues 853–877 (KVQNPPASIQTSENTEAVMKSSATK) are compositionally biased toward polar residues. The Nuclear localization signal signature appears at 900-907 (TKKDKSDD). The tract at residues 919–953 (KNPVNNVNKEDKGQEKEVNQGEARRSSNPFLKSTV) is disordered. Positions 926 to 943 (NKEDKGQEKEVNQGEARR) are enriched in basic and acidic residues. Polar residues predominate over residues 944–953 (SSNPFLKSTV).

As to quaternary structure, interacts with EZA1/SWN, LHP1, SLD5 and CLF in the nucleus. In terms of tissue distribution, expressed in root meristematic zones, initiating lateral roots, young leaves and the shoot apex.

Its subcellular location is the nucleus. Participates in maintaining the H3K27me3 mark at target genes by interacting with LHP1-PRC2 complexes during replication, thus contributing to H3K27me3 inheritance. In Arabidopsis thaliana (Mouse-ear cress), this protein is Protein ENHANCER OF LHP1 1.